The sequence spans 337 residues: Putative 4-hydroxythreonine-4-phosphate dehydrogenase (337 aa).

Positions 172, 216, and 271 each coordinate a divalent metal cation.

The protein belongs to the PdxA family. In terms of assembly, homodimer. It depends on Zn(2+) as a cofactor. Mg(2+) is required as a cofactor. Requires Co(2+) as cofactor.

The protein resides in the cytoplasm. The enzyme catalyses 4-(phosphooxy)-L-threonine + NAD(+) = 3-amino-2-oxopropyl phosphate + CO2 + NADH. The protein operates within cofactor biosynthesis; pyridoxine 5'-phosphate biosynthesis; pyridoxine 5'-phosphate from D-erythrose 4-phosphate: step 4/5. In terms of biological role, catalyzes the NAD(P)-dependent oxidation of 4-(phosphooxy)-L-threonine (HTP) into 2-amino-3-oxo-4-(phosphooxy)butyric acid which spontaneously decarboxylates to form 3-amino-2-oxopropyl phosphate (AHAP). The sequence is that of Putative 4-hydroxythreonine-4-phosphate dehydrogenase from Pasteurella multocida (strain Pm70).